The sequence spans 927 residues: Huntington interacting protein related 1 (927 aa).

The ENTH domain maps to 7–136 (AREVFVRAQL…TFHNKYPVVP (130 aa)). Residues 336-524 (RAVEDEKFAK…RESHANQLVQ (189 aa)) are a coiled coil. The I/LWEQ domain occupies 673-914 (QTDIDKDVVG…ALRKQHYHMA (242 aa)).

This sequence belongs to the SLA2 family.

It is found in the cytoplasm. It localises to the cytoskeleton. Functionally, regulates pre-synaptic vesicle recycling at neuromuscular junctions of mechanosensory neurons. Plays a role in maintaining a normal defecation cycle. This Caenorhabditis elegans protein is Huntington interacting protein related 1 (hipr-1).